Reading from the N-terminus, the 294-residue chain is Small ribosomal subunit protein uS2 (294 aa).

The segment covering 261–274 (MDEDADSKKSKAEE) has biased composition (basic and acidic residues). The tract at residues 261–294 (MDEDADSKKSKAEEPVIPTAEEPAITTIEVDQNE) is disordered.

This sequence belongs to the universal ribosomal protein uS2 family.

The polypeptide is Small ribosomal subunit protein uS2 (Leptospira borgpetersenii serovar Hardjo-bovis (strain JB197)).